The sequence spans 238 residues: Aspartate/glutamate leucyltransferase (238 aa).

The protein belongs to the R-transferase family. Bpt subfamily.

It is found in the cytoplasm. The catalysed reaction is N-terminal L-glutamyl-[protein] + L-leucyl-tRNA(Leu) = N-terminal L-leucyl-L-glutamyl-[protein] + tRNA(Leu) + H(+). The enzyme catalyses N-terminal L-aspartyl-[protein] + L-leucyl-tRNA(Leu) = N-terminal L-leucyl-L-aspartyl-[protein] + tRNA(Leu) + H(+). Functionally, functions in the N-end rule pathway of protein degradation where it conjugates Leu from its aminoacyl-tRNA to the N-termini of proteins containing an N-terminal aspartate or glutamate. This is Aspartate/glutamate leucyltransferase from Aeromonas hydrophila subsp. hydrophila (strain ATCC 7966 / DSM 30187 / BCRC 13018 / CCUG 14551 / JCM 1027 / KCTC 2358 / NCIMB 9240 / NCTC 8049).